The chain runs to 218 residues: Cytidylate kinase (218 aa).

11 to 19 contacts ATP; sequence GPGASGKGT.

It belongs to the cytidylate kinase family. Type 1 subfamily.

Its subcellular location is the cytoplasm. The catalysed reaction is CMP + ATP = CDP + ADP. It carries out the reaction dCMP + ATP = dCDP + ADP. The chain is Cytidylate kinase from Neisseria meningitidis serogroup A / serotype 4A (strain DSM 15465 / Z2491).